The primary structure comprises 284 residues: Tropomyosin alpha-1 chain (284 aa).

N-acetylmethionine is present on Met-1. The disordered stretch occupies residues 1–40 (MDAIKKKMQMLKLDKENALDRAEQAESDKKASEDRSKQLE). A coiled-coil region spans residues 1–284 (MDAIKKKMQM…DHALNDMTSI (284 aa)). Residues 12–40 (KLDKENALDRAEQAESDKKASEDRSKQLE) are compositionally biased toward basic and acidic residues.

In terms of assembly, homodimer. Heterodimer of an alpha (TPM1, TPM3 or TPM4) and a beta (TPM2) chain.

The protein localises to the cytoplasm. The protein resides in the cytoskeleton. Functionally, binds to actin filaments in muscle and non-muscle cells. Plays a central role, in association with the troponin complex, in the calcium dependent regulation of vertebrate striated muscle contraction. Smooth muscle contraction is regulated by interaction with caldesmon. In non-muscle cells is implicated in stabilizing cytoskeleton actin filaments. This is Tropomyosin alpha-1 chain from Chelon auratus (Golden grey mullet).